Reading from the N-terminus, the 263-residue chain is Phosphate import ATP-binding protein PstB (263 aa).

The ABC transporter domain occupies 17 to 258 (IDVRDLNFYY…PRRKETEDYI (242 aa)). Residue 49 to 56 (GPSGCGKS) participates in ATP binding.

Belongs to the ABC transporter superfamily. Phosphate importer (TC 3.A.1.7) family. As to quaternary structure, the complex is composed of two ATP-binding proteins (PstB), two transmembrane proteins (PstC and PstA) and a solute-binding protein (PstS).

It localises to the cell inner membrane. The enzyme catalyses phosphate(out) + ATP + H2O = ADP + 2 phosphate(in) + H(+). In terms of biological role, part of the ABC transporter complex PstSACB involved in phosphate import. Responsible for energy coupling to the transport system. This is Phosphate import ATP-binding protein PstB from Ralstonia nicotianae (strain ATCC BAA-1114 / GMI1000) (Ralstonia solanacearum).